A 53-amino-acid polypeptide reads, in one-letter code: UPF0391 membrane protein PSEEN0090 (53 aa).

2 helical membrane-spanning segments follow: residues 4 to 24 (WAITFLIIAIVAAVLGFGGIA) and 29 to 49 (GIAKILFIIFLVLFVASFFFG).

Belongs to the UPF0391 family.

It localises to the cell membrane. In Pseudomonas entomophila (strain L48), this protein is UPF0391 membrane protein PSEEN0090.